A 101-amino-acid polypeptide reads, in one-letter code: HssA/B-like protein 40 (101 aa).

The disordered stretch occupies residues 1-26; that stretch reads MTLFSSISSMSTSMSGSKSSISSFGS.

Belongs to the hssA/B family.

In Dictyostelium discoideum (Social amoeba), this protein is HssA/B-like protein 40 (hssl40).